The primary structure comprises 139 residues: Large ribosomal subunit protein uL16 (139 aa).

Basic residues predominate over residues 1–16; that stretch reads MLIPKRTKYRKQHRPD. Positions 1 to 23 are disordered; the sequence is MLIPKRTKYRKQHRPDRHGMSKG.

The protein belongs to the universal ribosomal protein uL16 family. As to quaternary structure, part of the 50S ribosomal subunit.

Functionally, binds 23S rRNA and is also seen to make contacts with the A and possibly P site tRNAs. This chain is Large ribosomal subunit protein uL16, found in Bifidobacterium animalis subsp. lactis (strain AD011).